Reading from the N-terminus, the 553-residue chain is MKSDIEIDHSIKALPITEIGKQIGLSDSQLIPYGHDKAKIDAYSIANMPRQGKLVLVTSINPTPAGEGKTTVTIGLVDAINRLGKSAIGALREPSMGPVFGLKGGATGGGYAQVIPMEDINLHFTGDIHAVSAAHNLLAAVIDNHLHQGNELKIDPENIYWRRVLDMNDRALRQITLGKGRVNGPERNSGFDITASSEIMAVLTLSKNLFDLKKRLSRIVVALDVQGKPVTVADLKVAGALTAILKDAINPNLVQSLEHSPFIIHGGPFANIAQGTNSVVATDAALKLADFAVTEAGFGSDLGGEKFMDVKVPVLGKEPDAVVIVATVKALKFHGGVALDHLSDKNVDAVRNGLDNLNRHLEAMTHYGKPVVVALNKFLDDDMEEIQLIKNFVEGEKKLQFEIVTSFVDGFEGSLDLAKKVIEATDNQRFFMPLYQADDSIENKIQTIVEKIYGGKDFELSDRAKKDLAEVKENGWGKLPVVIAKTPNSLTDDSKIHGAPTGFTIHIRRFIPKIGAGFIVAMAGKVLMMPGLGKNPAAEKIDVDENGKISGLS.

63–70 lines the ATP pocket; that stretch reads TPAGEGKT.

Belongs to the formate--tetrahydrofolate ligase family.

The catalysed reaction is (6S)-5,6,7,8-tetrahydrofolate + formate + ATP = (6R)-10-formyltetrahydrofolate + ADP + phosphate. The protein operates within one-carbon metabolism; tetrahydrofolate interconversion. The sequence is that of Formate--tetrahydrofolate ligase from Oenococcus oeni (strain ATCC BAA-331 / PSU-1).